The chain runs to 160 residues: Transcriptional repressor NrdR (160 aa).

Residues 1–11 (MRCPSCNSLDT) are compositionally biased toward polar residues. A disordered region spans residues 1-20 (MRCPSCNSLDTQVKDSRPTE). Residues 3–34 (CPSCNSLDTQVKDSRPTEDSAVIRRRRVCMAC) fold into a zinc finger. The ATP-cone domain maps to 49–139 (LTVIKRNGRR…VYRNFREAKD (91 aa)).

The protein belongs to the NrdR family. The cofactor is Zn(2+).

In terms of biological role, negatively regulates transcription of bacterial ribonucleotide reductase nrd genes and operons by binding to NrdR-boxes. This chain is Transcriptional repressor NrdR, found in Nitrobacter hamburgensis (strain DSM 10229 / NCIMB 13809 / X14).